The primary structure comprises 224 residues: Uracil-DNA glycosylase (224 aa).

Asp-64 serves as the catalytic Proton acceptor.

Belongs to the uracil-DNA glycosylase (UDG) superfamily. UNG family.

The protein localises to the cytoplasm. The enzyme catalyses Hydrolyzes single-stranded DNA or mismatched double-stranded DNA and polynucleotides, releasing free uracil.. Functionally, excises uracil residues from the DNA which can arise as a result of misincorporation of dUMP residues by DNA polymerase or due to deamination of cytosine. The chain is Uracil-DNA glycosylase from Geobacillus sp. (strain WCH70).